A 289-amino-acid polypeptide reads, in one-letter code: 3-methyl-2-oxobutanoate hydroxymethyltransferase (289 aa).

Over residues 1 to 10 (MSDSKSSAST) the composition is skewed to low complexity. Residues 1–33 (MSDSKSSASTSEDRLYGSAPSHDVPKRKTRTHH) are disordered. Mg(2+) contacts are provided by aspartate 70 and aspartate 109. Residues 70-71 (DS), aspartate 109, and lysine 139 each bind 3-methyl-2-oxobutanoate. Residue glutamate 141 coordinates Mg(2+). The active-site Proton acceptor is the glutamate 207.

Belongs to the PanB family. In terms of assembly, homodecamer; pentamer of dimers. Mg(2+) is required as a cofactor.

Its subcellular location is the cytoplasm. It carries out the reaction 3-methyl-2-oxobutanoate + (6R)-5,10-methylene-5,6,7,8-tetrahydrofolate + H2O = 2-dehydropantoate + (6S)-5,6,7,8-tetrahydrofolate. It functions in the pathway cofactor biosynthesis; (R)-pantothenate biosynthesis; (R)-pantoate from 3-methyl-2-oxobutanoate: step 1/2. In terms of biological role, catalyzes the reversible reaction in which hydroxymethyl group from 5,10-methylenetetrahydrofolate is transferred onto alpha-ketoisovalerate to form ketopantoate. The polypeptide is 3-methyl-2-oxobutanoate hydroxymethyltransferase (Rhodococcus jostii (strain RHA1)).